A 356-amino-acid polypeptide reads, in one-letter code: Phosphoribosyl pyrophosphate synthase-associated protein 1 (356 aa).

Methionine 1 carries the post-translational modification N-acetylmethionine. Serine 177 and serine 215 each carry phosphoserine.

Belongs to the ribose-phosphate pyrophosphokinase family. In terms of assembly, binds to PRPS1 and PRPS2.

Seems to play a negative regulatory role in 5-phosphoribose 1-diphosphate synthesis. The chain is Phosphoribosyl pyrophosphate synthase-associated protein 1 (Prpsap1) from Mus musculus (Mouse).